Consider the following 267-residue polypeptide: Glucosamine-6-phosphate deaminase (267 aa).

Residue Asp71 is the Proton acceptor; for enolization step of the active site. Asp140 functions as the For ring-opening step in the catalytic mechanism. Catalysis depends on His142, which acts as the Proton acceptor; for ring-opening step. Residue Glu147 is the For ring-opening step of the active site.

The protein belongs to the glucosamine/galactosamine-6-phosphate isomerase family. In terms of assembly, homohexamer.

It localises to the cytoplasm. It catalyses the reaction alpha-D-glucosamine 6-phosphate + H2O = beta-D-fructose 6-phosphate + NH4(+). It functions in the pathway nucleotide-sugar biosynthesis; UDP-N-acetyl-alpha-D-glucosamine biosynthesis; alpha-D-glucosamine 6-phosphate from D-fructose 6-phosphate: step 1/1. In terms of biological role, catalyzes the reversible conversion of alpha-D-glucosamine 6-phosphate (GlcN-6P) into beta-D-fructose 6-phosphate (Fru-6P) and ammonium ion, a regulatory reaction step in de novo uridine diphosphate-N-acetyl-alpha-D-glucosamine (UDP-GlcNAc) biosynthesis via hexosamine pathway. This is Glucosamine-6-phosphate deaminase from Caenorhabditis elegans.